A 139-amino-acid chain; its full sequence is Protein Turandot B (139 aa).

The first 21 residues, 1–21, serve as a signal peptide directing secretion; the sequence is MNFKTALICFALLLIGTLCSA.

Belongs to the Turandot family.

It localises to the secreted. Functionally, a humoral factor that may play a role in stress tolerance. This Drosophila sechellia (Fruit fly) protein is Protein Turandot B.